The primary structure comprises 233 residues: 7-cyano-7-deazaguanine synthase (233 aa).

8–18 (FSGGQDSTTCL) contacts ATP. Residues cysteine 188, cysteine 197, cysteine 200, and cysteine 203 each coordinate Zn(2+).

The protein belongs to the QueC family. Zn(2+) serves as cofactor.

It carries out the reaction 7-carboxy-7-deazaguanine + NH4(+) + ATP = 7-cyano-7-deazaguanine + ADP + phosphate + H2O + H(+). The protein operates within purine metabolism; 7-cyano-7-deazaguanine biosynthesis. Its function is as follows. Catalyzes the ATP-dependent conversion of 7-carboxy-7-deazaguanine (CDG) to 7-cyano-7-deazaguanine (preQ(0)). This Klebsiella pneumoniae (strain 342) protein is 7-cyano-7-deazaguanine synthase.